The chain runs to 261 residues: Leucine-rich repeat-containing protein 18 (261 aa).

LRR repeat units follow at residues G28–L49, D51–F72, N74–M95, S97–K118, N122–K144, E145–P167, and K168–I189.

The protein localises to the cytoplasm. May be involved in the regulation of spermatogenesis and sperm maturation. This Homo sapiens (Human) protein is Leucine-rich repeat-containing protein 18 (LRRC18).